A 201-amino-acid chain; its full sequence is Recombination protein RecR (201 aa).

Residues 60-75 (CRSCGNVDTSDPCTIC) form a C4-type zinc finger. The Toprim domain maps to 83 to 178 (TTLVVVEDVS…TVTRLAHGVP (96 aa)).

This sequence belongs to the RecR family.

May play a role in DNA repair. It seems to be involved in an RecBC-independent recombinational process of DNA repair. It may act with RecF and RecO. This is Recombination protein RecR from Methylorubrum extorquens (strain CM4 / NCIMB 13688) (Methylobacterium extorquens).